Here is a 3365-residue protein sequence, read N- to C-terminus: Probable serine/threonine-protein kinase roco9 (3365 aa).

Disordered stretches follow at residues 1 to 177 (MTSI…KSSK), 397 to 497 (ESTE…QPPQ), 944 to 985 (PIKK…GFLS), 1044 to 1098 (IHQQ…NNKI), and 1261 to 1301 (QNNL…ISKG). A compositionally biased stretch (basic and acidic residues) spans 8-27 (FDKKSKRSNEDTGEKEETKK). Composition is skewed to low complexity over residues 51-84 (LQQL…SLNT), 100-116 (STNS…STRS), 137-169 (SQTS…TVKT), and 397-415 (ESTE…TLEP). In terms of domain architecture, Rho-GAP spans 243–437 (TPLYSLIKRQ…RLPQQSSDDN (195 aa)). A compositionally biased stretch (polar residues) spans 421-434 (PLSTSTQRLPQQSS). Composition is skewed to low complexity over residues 435-445 (DDNSNNDNNNK), 457-489 (NNDN…QPKQ), 959-974 (SSPL…IPSK), 1044-1096 (IHQQ…NNNN), and 1262-1301 (NNLN…ISKG). The 681-residue stretch at 804 to 1484 (IWDIYSPLIE…DQIILWSSFF (681 aa)) folds into the Myotubularin phosphatase domain. LRR repeat units follow at residues 1510–1526 (SQKL…LSYF), 1527–1549 (STLT…IILL), 1550–1572 (SNLT…LLKL), 1576–1599 (KLKL…IYTL), 1600–1622 (STLT…ISKM), 1624–1645 (QLKC…LSLC), 1646–1668 (VGLE…FFKL), 1670–1691 (SLRM…KLDD), 1697–1720 (MNEI…MFEM), 1722–1743 (SLIH…LLDN), 1744–1770 (LVNL…LFKL), 1772–1789 (VLDL…HAML), 1790–1812 (PSLK…DFNL), 1814–1835 (LLSE…IGTK), 1837–1861 (LSLT…ALLK), and 1863–1887 (LKSL…DAIL). The span at 1932–1947 (SKEREKEKEKEKEKEK) shows a compositional bias: basic and acidic residues. 4 disordered regions span residues 1932 to 1963 (SKER…DKDK), 2190 to 2389 (NNNN…NNGS), 2507 to 2567 (APST…LQTP), and 2674 to 2704 (SNQQ…TSIN). Low complexity-rich tracts occupy residues 2190–2205 (NNNN…NNNN), 2216–2389 (SINN…NNGS), 2522–2567 (NNTS…LQTP), and 2676–2688 (QQQQ…STQH). Residues 3008–3269 (ELDPNPIGEG…KKLEEIELIL (262 aa)) enclose the Protein kinase domain. ATP-binding positions include 3014–3022 (IGEGGTATV) and Lys-3035. Asp-3132 functions as the Proton acceptor in the catalytic mechanism. Residues 3311 to 3333 (QQQKQQQLQQQKQSPKQLQQQKP) show a composition bias toward low complexity. The interval 3311-3365 (QQQKQQQLQQQKQSPKQLQQQKPLPTPPKQLSNNDSTPTKPLDDSSDSSSEDSNN) is disordered. Positions 3354 to 3365 (DSSDSSSEDSNN) are enriched in acidic residues.

Belongs to the protein kinase superfamily. TKL Ser/Thr protein kinase family. ROCO subfamily.

It catalyses the reaction L-seryl-[protein] + ATP = O-phospho-L-seryl-[protein] + ADP + H(+). It carries out the reaction L-threonyl-[protein] + ATP = O-phospho-L-threonyl-[protein] + ADP + H(+). The protein is Probable serine/threonine-protein kinase roco9 (roco9) of Dictyostelium discoideum (Social amoeba).